The following is a 130-amino-acid chain: Small ribosomal subunit protein uS9 (130 aa).

Belongs to the universal ribosomal protein uS9 family.

In Chromobacterium violaceum (strain ATCC 12472 / DSM 30191 / JCM 1249 / CCUG 213 / NBRC 12614 / NCIMB 9131 / NCTC 9757 / MK), this protein is Small ribosomal subunit protein uS9.